The sequence spans 336 residues: MTFIIAVVGATGNQGGSVARSLVQNPSFSVRAITRSPDSQASRSLLSAGAEVVKADGFNGEEMLAAFQGAWGAFVNLNSDDPIWRQPGGPTEFDLGKTIVDAAAGAGVKHLVFSSGPPCVEMTGGKVNMKAMEMKYKIEQYARKLGSFETLTPINPAWYLENFLAEEVAPIFGGFPYFPDEEGYLTFRVPHWAGPGGDNRVPFLGIRDDFGDIIHGIFLNPERYNGRVIHGVSQLRGFDELVADFEQVTGKKCRYEPVLPSWEAFDIHGIPELEDVKLMFAFTQTTGGRYFAPEPSEADTAAELKRTTAVALGKPEPEQHTLRTKDFFRKHFATEK.

NADP(+) is bound at residue Lys-135.

The protein belongs to the NmrA-type oxidoreductase family.

The catalysed reaction is 4-{[(2S,5S)-5-[(4-hydroxyphenyl)methyl]-2,5-dihydropyrazin-2-yl]methyl}phenol + 2 NADPH + 2 H(+) = (S,S)-2,5-di-(p-hydroxybenzyl)piperazine + 2 NADP(+). The protein operates within secondary metabolite biosynthesis. In terms of biological role, nmrA-like family domain-containing oxidoreductase; part of the gene cluster that mediates the biosynthesis of the alkaloid (-)-FR901483, a potent immunosuppressant that shows efficacy in animal models and a probable inhibitor of purine nucleotide biosynthesis by targeting phosphoribosylpyrophosphate amidotransferase (PPAT). Within the pathway, FrzB catalyzes the reduction of 4-{[(2S,5S)-5-[(4-hydroxyphenyl)methyl]-2,5-dihydropyrazin-2-yl]methyl}phenol to produce the (S,S)-dityrosyl-piperazine intermediate. The biosynthesis of (-)-FR901483 starts with the condensation of two L-tyrosines to yield (S,S)-dityrosyl-piperazine. This process occurs in 3 steps with the non-canonical nonribosomal peptide synthetase FrzA catalyzing the reduction of L-tyrosine into L-tyrosinal, the spontaneous condensation of 2 L-tyrosinal units, and the subsequent reduction by the NmrA-like family domain-containing oxidoreductase FrzB. The cytochrome P450 monooxygenase FrzC then performs coupling between N10 and C1' to morph the piperazine into a 1,4-diazabicyclo[3.2.1]octane spiro-fused to a 2,5-cyclohexadienone. The dienone portion is further reduced to cyclohexanone by the flavin-dependent reductase FrzD. The methyltranserases (MTs) FrzE and FrzF are then involved in the methylation at the C10' amine and the C4 phenolic oxygen, respectively. The order of the two MTs appear to be interchangeable. Cleavage of the C9-N10' bond by the dioxygenase FrzG then leads to formation of a conjugated iminium. In addition to the oxidation of C9, an additional dehydrogenation between C7 and C8 can occur to give a likely shunt product. The next biosynthetic step is the intramolecular aldol condensation catalyzed by the newly identified aldolase FrzH to yield an aza-tricyclic product with the formation of a C9-C3' bond. The short-chain dehydrogenase/reductase FrzI then produces dephospho-(-)-FR901483 that is phosphorylated at C4'-OH into (-)-FR901483 by the phosphotransferase FrzJ. In Cladobotryum sp, this protein is NmrA-like family domain-containing oxidoreductase FrzB.